The primary structure comprises 266 residues: MTKKKLPVRFTGQHFTIDKVLIKDAIRQANISNQDTVLDIGAGKGFLTVHLLKIANNVVAIENDTALVEHLRKLFSDARNVQVVGCDFRNFAVPKFPFKVVSNIPYGITSDIFKILMFESLGNFLGGSIVLQLEPTQKLFSRKLYNPYTVFYHTFFDLKLVYEVGPESFLPPPTVKSALLNIKRKHLFFDFKFKAKYLAFISYLLEKPDLSVKTALKSIFRKSQVRSISEKFGLNLNAQIVCLSPSQWLNCFLEMLEVVPEKFHPS.

Residues histidine 14, threonine 16, glycine 41, glutamate 62, aspartate 87, and asparagine 103 each coordinate S-adenosyl-L-methionine.

It belongs to the class I-like SAM-binding methyltransferase superfamily. rRNA adenine N(6)-methyltransferase family.

In terms of biological role, involved in erythromycin resistance. This Bacteroides fragilis protein is rRNA adenine N-6-methyltransferase (ermF).